The sequence spans 558 residues: Tyrosine N-monooxygenase (558 aa).

Residues 13 to 33 (VLAAPLLSSSAILKLLLFVVT) form a helical membrane-spanning segment. The disordered stretch occupies residues 48–67 (TTKCSSTTCASPPAGVGNPP). The segment covering 49-65 (TKCSSTTCASPPAGVGN) has biased composition (low complexity). Heme b-binding residues include Arg-138, Arg-167, His-422, Arg-491, and Cys-493.

This sequence belongs to the cytochrome P450 family. The cofactor is heme b.

It is found in the endoplasmic reticulum membrane. It catalyses the reaction L-tyrosine + 2 reduced [NADPH--hemoprotein reductase] + 2 O2 = (E)-4-hydroxyphenylacetaldehyde oxime + 2 oxidized [NADPH--hemoprotein reductase] + CO2 + 3 H2O + 2 H(+). The enzyme catalyses L-tyrosine + reduced [NADPH--hemoprotein reductase] + O2 = N-hydroxy-L-tyrosine + oxidized [NADPH--hemoprotein reductase] + H2O + 2 H(+). It carries out the reaction N-hydroxy-L-tyrosine + reduced [NADPH--hemoprotein reductase] + O2 = N,N-dihydroxy-L-tyrosine + oxidized [NADPH--hemoprotein reductase] + H2O + H(+). The catalysed reaction is N,N-dihydroxy-L-tyrosine + H(+) = (E)-4-hydroxyphenylacetaldehyde oxime + CO2 + H2O. Its pathway is secondary metabolite biosynthesis; dhurrin biosynthesis; dhurrin from L-tyrosine: step 1/3. Cytochrome P450 involved in the biosynthesis of the cyanogenic glucoside dhurrin. Catalyzes the conversion of L-tyrosine to p-hydroxyphenylacetaldehyde oxime, via the N-hydroxy-L-tyrosine and N,N-dihydroxy-L-tyrosine intermediates. Produces the (E) isomer of the final oxime product. This is Tyrosine N-monooxygenase (CYP79A1) from Sorghum bicolor (Sorghum).